A 199-amino-acid chain; its full sequence is Probable GTP-binding protein EngB (199 aa).

Residues 21–195 (IYTEIAFLGR…EQKIILESLG (175 aa)) enclose the EngB-type G domain. GTP is bound by residues 29 to 36 (GRSNVGKS), 56 to 60 (GKTQL), 81 to 84 (DLPG), 151 to 154 (TKAD), and 174 to 176 (VSN). Positions 36 and 58 each coordinate Mg(2+).

Belongs to the TRAFAC class TrmE-Era-EngA-EngB-Septin-like GTPase superfamily. EngB GTPase family. Mg(2+) is required as a cofactor.

In terms of biological role, necessary for normal cell division and for the maintenance of normal septation. This Campylobacter lari (strain RM2100 / D67 / ATCC BAA-1060) protein is Probable GTP-binding protein EngB.